The following is a 197-amino-acid chain: Cold-regulated 413 plasma membrane protein 1 (197 aa).

The Extracellular segment spans residues methionine 1–glycine 40. The chain crosses the membrane as a helical span at residues leucine 41 to valine 61. At leucine 62 to methionine 71 the chain is on the cytoplasmic side. A helical membrane pass occupies residues leucine 72–phenylalanine 92. The Extracellular portion of the chain corresponds to arginine 93–glycine 94. A helical transmembrane segment spans residues glutamate 95–alanine 115. At arginine 116–glutamate 117 the chain is on the cytoplasmic side. A helical membrane pass occupies residues tyrosine 118–glycine 138. At threonine 139–arginine 141 the chain is on the extracellular side. A helical transmembrane segment spans residues aspartate 142 to isoleucine 162. Residues arginine 163–asparagine 176 are Cytoplasmic-facing. The chain crosses the membrane as a helical span at residues glycine 177–phenylalanine 197.

This sequence belongs to the Cold-regulated 413 protein family.

Its subcellular location is the membrane. The chain is Cold-regulated 413 plasma membrane protein 1 (COR413PM1) from Arabidopsis thaliana (Mouse-ear cress).